The chain runs to 185 residues: MKNDTLKGQYRINEQIRAKEVRIVGDEIEPKVYPIFQALKMAEEKELDLVEISPNAQPPVCRIIDYSKFLYQLKKRQKEQKAKQVKVNVKEIRFGPQTDDHDYNFKLKHARGFLEDGDKVKAYVFFKGRSILFKEQGEVLLLRFANDLEDFAKVDQMPVLEGKRMTIQLSPKKRKCLKNRRLPNR.

This sequence belongs to the IF-3 family. Monomer.

The protein localises to the cytoplasm. Its function is as follows. IF-3 binds to the 30S ribosomal subunit and shifts the equilibrium between 70S ribosomes and their 50S and 30S subunits in favor of the free subunits, thus enhancing the availability of 30S subunits on which protein synthesis initiation begins. This is Translation initiation factor IF-3 from Bacteroides thetaiotaomicron (strain ATCC 29148 / DSM 2079 / JCM 5827 / CCUG 10774 / NCTC 10582 / VPI-5482 / E50).